Reading from the N-terminus, the 36-residue chain is Photosystem I reaction center subunit VIII (36 aa).

Residues 6–26 traverse the membrane as a helical segment; it reads LPSIFVPLVGLVFPAIAMASL.

It belongs to the PsaI family.

It localises to the plastid. The protein localises to the chloroplast thylakoid membrane. May help in the organization of the PsaL subunit. The protein is Photosystem I reaction center subunit VIII of Liriodendron tulipifera (Tuliptree).